Here is a 195-residue protein sequence, read N- to C-terminus: 7-methyl-GTP pyrophosphatase (195 aa).

D71 serves as the catalytic Proton acceptor.

This sequence belongs to the Maf family. YceF subfamily. The cofactor is a divalent metal cation.

The protein localises to the cytoplasm. The enzyme catalyses N(7)-methyl-GTP + H2O = N(7)-methyl-GMP + diphosphate + H(+). Functionally, nucleoside triphosphate pyrophosphatase that hydrolyzes 7-methyl-GTP (m(7)GTP). May have a dual role in cell division arrest and in preventing the incorporation of modified nucleotides into cellular nucleic acids. This chain is 7-methyl-GTP pyrophosphatase, found in Shewanella oneidensis (strain ATCC 700550 / JCM 31522 / CIP 106686 / LMG 19005 / NCIMB 14063 / MR-1).